The sequence spans 435 residues: AP-2 complex subunit mu (435 aa).

In terms of domain architecture, MHD spans 170 to 434 (RNELFLDVLE…IGRSGIYETR (265 aa)). A 1,2-diacyl-sn-glycero-3-phospho-(1D-myo-inositol-3,4,5-trisphosphate) is bound by residues Lys-341, Lys-345, and Lys-354.

Belongs to the adaptor complexes medium subunit family. As to quaternary structure, adaptor protein complex 2 (AP-2) is a heterotetramer composed of two large adaptins (alpha-type subunit and beta-type subunit), a medium adaptin (mu-type subunit) and a small adaptin (sigma-type subunit).

It is found in the cell membrane. The protein resides in the membrane. It localises to the coated pit. Its function is as follows. Component of the adaptor complexes which link clathrin to receptors in coated vesicles. Clathrin-associated protein complexes are believed to interact with the cytoplasmic tails of membrane proteins, leading to their selection and concentration. AP50 is a subunit of the plasma membrane adaptor. The complex binds polyphosphoinositide-containing lipids. This is AP-2 complex subunit mu (ap2m1) from Xenopus laevis (African clawed frog).